The primary structure comprises 252 residues: Outer kinetochore KNL1 complex subunit ZWINT (252 aa).

The disordered stretch occupies residues 80 to 99 (QSPDALASEDASRQKATETK). A compositionally biased stretch (basic and acidic residues) spans 89–99 (DASRQKATETK). Residues 120 to 221 (LSEALPQVKE…QRNQSYLQLL (102 aa)) adopt a coiled-coil conformation. 2 positions are modified to phosphoserine: Ser216 and Ser249.

Component of the KNL1 complex composed of KNL1 and ZWINT. Part of the ten-subunit outer kinetochore KMN network that includes the KNL1, MIS12 and NDC80 complexes; a bioriented kinetochore contains approximately 150 copies of the network. Interacts with the MIS12 complex subunits MIS12 DSN1, and PMF1. Interacts with the NDC80 complex subunit NDC80 during mitosis. Interacts with ZW10. Interacts with CETN3.

It is found in the nucleus. Its subcellular location is the chromosome. The protein localises to the centromere. It localises to the kinetochore. Acts as a component of the outer kinetochore KNL1 complex that serves as a docking point for spindle assembly checkpoint components and mediates microtubule-kinetochore interactions. Kinetochores, consisting of a centromere-associated inner segment and a microtubule-contacting outer segment, play a crucial role in chromosome segregation by mediating the physical connection between centromeric DNA and spindle microtubules. The outer kinetochore is made up of the ten-subunit KMN network, comprising the MIS12, NDC80 and KNL1 complexes, and auxiliary microtubule-associated components; together they connect the outer kinetochore with the inner kinetochore, bind microtubules, and mediate interactions with mitotic checkpoint proteins that delay anaphase until chromosomes are bioriented on the spindle. Targets the RZZ complex to the kinetochore at prometaphase. Recruits MAD2L1 to the kinetochore, but is not required for BUB1B localization. In addition to orienting mitotic chromosomes, it is also essential for alignment of homologous chromosomes during meiotic metaphase I. In meiosis I, required to activate the spindle assembly checkpoint at unattached kinetochores to correct erroneous kinetochore-microtubule attachments. The protein is Outer kinetochore KNL1 complex subunit ZWINT (Zwint) of Mus musculus (Mouse).